A 155-amino-acid polypeptide reads, in one-letter code: Protein SprT-like (155 aa).

Positions 7 to 145 (QRHMEEVSLQ…GSCGGKLIQI (139 aa)) constitute a SprT-like domain. A Zn(2+)-binding site is contributed by His67. Glu68 is a catalytic residue. His71 contributes to the Zn(2+) binding site.

It belongs to the SprT family. Requires Zn(2+) as cofactor.

The protein resides in the cytoplasm. In Listeria monocytogenes serotype 4a (strain HCC23), this protein is Protein SprT-like.